A 402-amino-acid chain; its full sequence is Dual-specificity RNA methyltransferase RlmN (402 aa).

The active-site Proton acceptor is the E94. Positions 100 to 351 constitute a Radical SAM core domain; that stretch reads EDDRGTLCIS…ATVRKTRGDD (252 aa). Cysteines 107 and 356 form a disulfide. The [4Fe-4S] cluster site is built by C114, C118, and C121. Residues 182–183, S214, 236–238, and N313 contribute to the S-adenosyl-L-methionine site; these read GE and SLH. C356 (S-methylcysteine intermediate) is an active-site residue.

This sequence belongs to the radical SAM superfamily. RlmN family. [4Fe-4S] cluster serves as cofactor.

The protein localises to the cytoplasm. The catalysed reaction is adenosine(2503) in 23S rRNA + 2 reduced [2Fe-2S]-[ferredoxin] + 2 S-adenosyl-L-methionine = 2-methyladenosine(2503) in 23S rRNA + 5'-deoxyadenosine + L-methionine + 2 oxidized [2Fe-2S]-[ferredoxin] + S-adenosyl-L-homocysteine. It carries out the reaction adenosine(37) in tRNA + 2 reduced [2Fe-2S]-[ferredoxin] + 2 S-adenosyl-L-methionine = 2-methyladenosine(37) in tRNA + 5'-deoxyadenosine + L-methionine + 2 oxidized [2Fe-2S]-[ferredoxin] + S-adenosyl-L-homocysteine. Functionally, specifically methylates position 2 of adenine 2503 in 23S rRNA and position 2 of adenine 37 in tRNAs. m2A2503 modification seems to play a crucial role in the proofreading step occurring at the peptidyl transferase center and thus would serve to optimize ribosomal fidelity. The polypeptide is Dual-specificity RNA methyltransferase RlmN (Polynucleobacter asymbioticus (strain DSM 18221 / CIP 109841 / QLW-P1DMWA-1) (Polynucleobacter necessarius subsp. asymbioticus)).